The following is a 168-amino-acid chain: Phospholipase A and acyltransferase 1 (168 aa).

Over 1–138 (MAFNDCFSLN…GEGVSEQANR (138 aa)) the chain is Cytoplasmic. The region spanning 20-135 (LIEVFRPGYQ…LRYGEGVSEQ (116 aa)) is the LRAT domain. Residue histidine 30 is part of the active site. Cysteine 119 functions as the Acyl-thioester intermediate in the catalytic mechanism. Residues 139–159 (AISTVEFVTAAVGVFSFLGLF) traverse the membrane as a helical segment. The Lumenal portion of the chain corresponds to 160 to 168 (PKGQRAKYY).

Belongs to the H-rev107 family. As to expression, abundantly expressed in testis, skeletal muscle, brain, and heart. Highly expressed in the testis, skeletal muscle, brain, heart, and thyroid.

Its subcellular location is the membrane. It localises to the cytoplasm. It is found in the nucleus. It carries out the reaction a 1,2-diacyl-sn-glycero-3-phosphocholine + H2O = a 1-acyl-sn-glycero-3-phosphocholine + a fatty acid + H(+). The catalysed reaction is a 1,2-diacyl-sn-glycero-3-phosphocholine + H2O = a 2-acyl-sn-glycero-3-phosphocholine + a fatty acid + H(+). It catalyses the reaction 1,2-dihexadecanoyl-sn-glycero-3-phosphocholine + H2O = 2-hexadecanoyl-sn-glycero-3-phosphocholine + hexadecanoate + H(+). The enzyme catalyses 1,2-dihexadecanoyl-sn-glycero-3-phosphocholine + H2O = 1-hexadecanoyl-sn-glycero-3-phosphocholine + hexadecanoate + H(+). It carries out the reaction 1-hexadecanoyl-2-(5Z,8Z,11Z,14Z-eicosatetraenoyl)-sn-glycero-3-phosphoethanolamine + H2O = 2-(5Z,8Z,11Z,14Z)-eicosatetraenoyl-sn-glycero-3-phosphoethanolamine + hexadecanoate + H(+). The catalysed reaction is 1-hexadecanoyl-2-(5Z,8Z,11Z,14Z-eicosatetraenoyl)-sn-glycero-3-phosphoethanolamine + H2O = 1-hexadecanoyl-sn-glycero-3-phosphoethanolamine + (5Z,8Z,11Z,14Z)-eicosatetraenoate + H(+). It catalyses the reaction 1,2-di-(9Z-octadecenoyl)-sn-glycero-3-phosphoethanolamine + 1,2-dihexadecanoyl-sn-glycero-3-phosphocholine = hexadecanoyl-sn-glycero-3-phosphocholine + N-hexadecanoyl-1,2-di-(9Z-octadecenoyl)-sn-glycero-3-phosphoethanolamine + H(+). The enzyme catalyses 1,2-dihexadecanoyl-sn-glycero-3-phosphocholine + a 2-acyl-sn-glycero-3-phosphocholine = a 1-hexadecanoyl-2-acyl-sn-glycero-3-phosphocholine + 2-hexadecanoyl-sn-glycero-3-phosphocholine. Functionally, exhibits both phospholipase A1/2 and acyltransferase activities. Shows phospholipase A1 (PLA1) and A2 (PLA2) activity, catalyzing the calcium-independent release of fatty acids from the sn-1 or sn-2 position of glycerophospholipids. Shows O-acyltransferase activity, catalyzing the transfer of a fatty acyl group from glycerophospholipid to the hydroxyl group of lysophospholipid. Shows N-acyltransferase activity, catalyzing the calcium-independent transfer of a fatty acyl group at the sn-1 position of phosphatidylcholine (PC) and other glycerophospholipids to the primary amine of phosphatidylethanolamine (PE), forming N-acylphosphatidylethanolamine (NAPE) which serves as precursor for N-acylethanolamines (NAEs). The protein is Phospholipase A and acyltransferase 1 of Homo sapiens (Human).